We begin with the raw amino-acid sequence, 173 residues long: Xanthine-guanine phosphoribosyltransferase (173 aa).

Residues 48 to 49 (RG) and 107 to 115 (DDLVDTGKT) each bind 5-phospho-alpha-D-ribose 1-diphosphate. Mg(2+) is bound at residue D108. Guanine-binding residues include D111 and I154. The xanthine site is built by D111 and I154. GMP-binding positions include 111-115 (DTGKT) and 153-154 (WI).

The protein belongs to the purine/pyrimidine phosphoribosyltransferase family. XGPT subfamily. Homotetramer. Mg(2+) serves as cofactor.

It is found in the cell inner membrane. It carries out the reaction GMP + diphosphate = guanine + 5-phospho-alpha-D-ribose 1-diphosphate. It catalyses the reaction XMP + diphosphate = xanthine + 5-phospho-alpha-D-ribose 1-diphosphate. The catalysed reaction is IMP + diphosphate = hypoxanthine + 5-phospho-alpha-D-ribose 1-diphosphate. Its pathway is purine metabolism; GMP biosynthesis via salvage pathway; GMP from guanine: step 1/1. It functions in the pathway purine metabolism; XMP biosynthesis via salvage pathway; XMP from xanthine: step 1/1. Functionally, purine salvage pathway enzyme that catalyzes the transfer of the ribosyl-5-phosphate group from 5-phospho-alpha-D-ribose 1-diphosphate (PRPP) to the N9 position of the 6-oxopurines guanine and xanthine to form the corresponding ribonucleotides GMP (guanosine 5'-monophosphate) and XMP (xanthosine 5'-monophosphate), with the release of PPi. To a lesser extent, also acts on hypoxanthine. This is Xanthine-guanine phosphoribosyltransferase from Rhodopseudomonas palustris (strain ATCC BAA-98 / CGA009).